A 1214-amino-acid chain; its full sequence is Brassinosteroid LRR receptor kinase BRL3 (1214 aa).

The first 29 residues, methionine 1–alanine 29, serve as a signal peptide directing secretion. N-linked (GlcNAc...) asparagine glycosylation is present at asparagine 61. The Cys pair 1 signature appears at cysteine 69–cysteine 76. 22 LRR repeats span residues leucine 103–arginine 127, proline 131–serine 155, cysteine 156–proline 177, proline 178–glycine 202, histidine 204–glutamate 228, serine 230–methionine 250, proline 252–glycine 276, cysteine 277–cysteine 302, arginine 303–valine 325, leucine 327–leucine 351, lysine 353–glutamine 375, arginine 377–asparagine 400, isoleucine 401–cysteine 427, leucine 429–serine 451, leucine 452–cysteine 476, asparagine 478–leucine 500, lysine 502–serine 525, threonine 526–cysteine 549, valine 550–asparagine 572, leucine 573–cysteine 597, asparagine 599–glutamine 621, and glycine 650–serine 673. N-linked (GlcNAc...) asparagine glycosylation is found at asparagine 145, asparagine 163, asparagine 197, and asparagine 210. Asparagine 254, asparagine 264, and asparagine 279 each carry an N-linked (GlcNAc...) asparagine glycan. N-linked (GlcNAc...) asparagine glycosylation is found at asparagine 400 and asparagine 413. Asparagine 466 is a glycosylation site (N-linked (GlcNAc...) asparagine). N-linked (GlcNAc...) asparagine glycans are attached at residues asparagine 512 and asparagine 524. A glycan (N-linked (GlcNAc...) asparagine) is linked at asparagine 561. Residue tyrosine 678 coordinates brassinolide. 4 LRR repeats span residues asparagine 689–asparagine 712, methionine 713–glycine 736, lysine 738–cysteine 760, and histidine 762–threonine 786. The Cys pair 2 signature appears at cysteine 799 to cysteine 806. A helical transmembrane segment spans residues serine 829 to tyrosine 849. The region spanning phenylalanine 913 to leucine 1196 is the Protein kinase domain. Residues isoleucine 919–valine 927, lysine 941, glutamate 987–methionine 989, serine 993–phenylalanine 996, aspartate 1039–asparagine 1044, and aspartate 1057 each bind ATP. Aspartate 1039 serves as the catalytic Proton acceptor.

It belongs to the protein kinase superfamily. Ser/Thr protein kinase family. As to expression, highly expressed in roots. Expressed at low levels in shoots.

The protein localises to the cell membrane. It carries out the reaction L-seryl-[protein] + ATP = O-phospho-L-seryl-[protein] + ADP + H(+). The enzyme catalyses L-threonyl-[protein] + ATP = O-phospho-L-threonyl-[protein] + ADP + H(+). Functionally, may be involved in brassenosteroid (BR) perception in roots. This chain is Brassinosteroid LRR receptor kinase BRL3, found in Oryza sativa subsp. japonica (Rice).